We begin with the raw amino-acid sequence, 331 residues long: Ferredoxin--NADP reductase (331 aa).

7 residues coordinate FAD: glutamate 34, glutamine 42, tyrosine 47, valine 87, phenylalanine 121, aspartate 285, and threonine 325.

The protein belongs to the ferredoxin--NADP reductase type 2 family. Homodimer. FAD is required as a cofactor.

It catalyses the reaction 2 reduced [2Fe-2S]-[ferredoxin] + NADP(+) + H(+) = 2 oxidized [2Fe-2S]-[ferredoxin] + NADPH. This is Ferredoxin--NADP reductase from Lactiplantibacillus plantarum (strain ATCC BAA-793 / NCIMB 8826 / WCFS1) (Lactobacillus plantarum).